The sequence spans 227 residues: PKHD-type hydroxylase BTH_II1201 (227 aa).

A Fe2OG dioxygenase domain is found at 78–178; sequence KVFPPLFNRY…RVASFFWIQS (101 aa). Residues His-96, Asp-98, and His-159 each coordinate Fe cation. Arg-169 serves as a coordination point for 2-oxoglutarate.

The cofactor is Fe(2+). L-ascorbate is required as a cofactor.

The sequence is that of PKHD-type hydroxylase BTH_II1201 from Burkholderia thailandensis (strain ATCC 700388 / DSM 13276 / CCUG 48851 / CIP 106301 / E264).